Reading from the N-terminus, the 156-residue chain is ATP synthase subunit b (156 aa).

Residues 12-32 (IAFAIFVWFCVKYVWPPITAA) form a helical membrane-spanning segment.

Belongs to the ATPase B chain family. F-type ATPases have 2 components, F(1) - the catalytic core - and F(0) - the membrane proton channel. F(1) has five subunits: alpha(3), beta(3), gamma(1), delta(1), epsilon(1). F(0) has three main subunits: a(1), b(2) and c(10-14). The alpha and beta chains form an alternating ring which encloses part of the gamma chain. F(1) is attached to F(0) by a central stalk formed by the gamma and epsilon chains, while a peripheral stalk is formed by the delta and b chains.

It localises to the cell inner membrane. In terms of biological role, f(1)F(0) ATP synthase produces ATP from ADP in the presence of a proton or sodium gradient. F-type ATPases consist of two structural domains, F(1) containing the extramembraneous catalytic core and F(0) containing the membrane proton channel, linked together by a central stalk and a peripheral stalk. During catalysis, ATP synthesis in the catalytic domain of F(1) is coupled via a rotary mechanism of the central stalk subunits to proton translocation. Functionally, component of the F(0) channel, it forms part of the peripheral stalk, linking F(1) to F(0). In Marinobacter nauticus (strain ATCC 700491 / DSM 11845 / VT8) (Marinobacter aquaeolei), this protein is ATP synthase subunit b.